Here is a 627-residue protein sequence, read N- to C-terminus: Protein fem-1 homolog B (627 aa).

ANK repeat units lie at residues 45 to 74 (QRSTPLIIAARNGHTKVVRLLLEHYRVQTQ), 87 to 116 (DGATALWCAAGAGHFEVVKLLVSHGANVNH), 120 to 149 (TNSTPLRAACFDGRLDIVKYLVENNANISI), 153 to 182 (YDNTCLMIAAYKGHTDVVRYLLEQHADPNA), 186 to 215 (CGATALHFAAEAGHLEIVRELVKWKAAMMV), and 218 to 248 (HGMTPLKVAAESCKADVVELLLAHAGCNRRS). The stretch at 344-377 (SHPIIYRGAVYADNMEFEQCIKLWLHALHLRQKG) is one TPR repeat. 2 ANK repeats span residues 483 to 527 (DGST…DVNA) and 531 to 568 (EGNSPLHLIVQYHRPISDFLTLHSIIISLVEAGAHTDM).

The protein belongs to the fem-1 family. In terms of assembly, component of a CRL2 E3 ubiquitin-protein ligase complex, also named ECS (Elongin BC-CUL2/5-SOCS-box protein) complex.

The protein resides in the cytoplasm. The protein localises to the nucleus. It functions in the pathway protein modification; protein ubiquitination. Its function is as follows. Substrate-recognition component of a Cul2-RING (CRL2) E3 ubiquitin-protein ligase complex of the DesCEND (destruction via C-end degrons) pathway, which recognizes a C-degron located at the extreme C terminus of target proteins, leading to their ubiquitination and degradation. The C-degron recognized by the DesCEND pathway is usually a motif of less than ten residues and can be present in full-length proteins, truncated proteins or proteolytically cleaved forms. The CRL2(FEM1B) complex specifically recognizes proteins ending with -Gly-Leu-Asp-Arg, leading to their ubiquitination and degradation. The polypeptide is Protein fem-1 homolog B (Gallus gallus (Chicken)).